A 137-amino-acid polypeptide reads, in one-letter code: MVASYEIEFIGEGEVAGILREALRTDSRVESFEEFERGFKLRLVGAKRRITIVCKGSVQSDDCLLIVNARKMPENGGIALNADKIAERCGSKPEIAMLGAIAKLGVVDLKRLMSVIYREMGYGDVLAVKKGFEATNI.

This is an uncharacterized protein from Archaeoglobus fulgidus (strain ATCC 49558 / DSM 4304 / JCM 9628 / NBRC 100126 / VC-16).